We begin with the raw amino-acid sequence, 550 residues long: Small ribosomal subunit protein uS3m (550 aa).

The disordered stretch occupies residues Asn-112 to Ser-133.

This sequence belongs to the universal ribosomal protein uS3 family.

Its subcellular location is the mitochondrion. This is Small ribosomal subunit protein uS3m (RPS3) from Oenothera berteroana (Bertero's evening primrose).